We begin with the raw amino-acid sequence, 773 residues long: Polyribonucleotide nucleotidyltransferase (773 aa).

Mg(2+)-binding residues include D532 and D538. A KH domain is found at 598–657 (PRVITIKVPVDKIGEVIGPKGKVINAITEETGAQISIEDDGTVFVGATDGLSAQAAINKI). The S1 motif domain occupies 669-738 (GERFLGTVVK…KRGKISLVLV (70 aa)). The disordered stretch occupies residues 749–773 (APADAGAAQEFGSGTAPADAATASS).

This sequence belongs to the polyribonucleotide nucleotidyltransferase family. Mg(2+) serves as cofactor.

The protein resides in the cytoplasm. The enzyme catalyses RNA(n+1) + phosphate = RNA(n) + a ribonucleoside 5'-diphosphate. In terms of biological role, involved in mRNA degradation. Catalyzes the phosphorolysis of single-stranded polyribonucleotides processively in the 3'- to 5'-direction. In Mycobacterium leprae (strain Br4923), this protein is Polyribonucleotide nucleotidyltransferase.